The sequence spans 161 residues: Assembly protein P7 (161 aa).

As to quaternary structure, homodimer. Part of the packaging complex composed of RDRP, P4 and P7. Interacts with RDRP.

It is found in the virion. In terms of biological role, assembly protein part of the packaging complex that packages the viral RNA segments, replicate them into a double-stranded form and transcribe them. Required for efficient procapsid assembly. Necessary for stable packaging. May stabilize the RNA-dependent RNA polymerase (RdRP) in its position at the three-fold axis on the inner side of empty-unexpanded procapsids. Could play a role in viral RNA recognition. Seems to be involved in the regulation of plus strand synthesis (transcription) as a fidelity factor. The protein is Assembly protein P7 (P7) of Pseudomonas phage phi6 (Bacteriophage phi-6).